The following is a 283-amino-acid chain: Daunorubicin resistance ABC transporter permease protein DrrB1 (283 aa).

Residues 53 to 280 (VQLIDIVLMP…PLTMRLYRNK (228 aa)) form the ABC transmembrane type-2 domain. 6 helical membrane passes run 58-78 (IVLM…GAFA), 85-105 (LQFY…VYTG), 150-170 (VFLG…VVGA), 171-191 (MLVL…LGVV), 198-218 (VSGT…IFVM), and 252-272 (FWDV…FAPL).

The protein belongs to the ABC-2 integral membrane protein family. The complex is probably composed of two ATP-binding proteins (DrrA1) and two transmembrane proteins (DrrB1).

The protein localises to the cell membrane. Part of the ABC transporter complex DrrA1B1 involved in daunorubicin efflux. Responsible for the translocation of the substrate across the membrane. Confers self-resistance to daunorubicin, an antibiotic produced by S.coeruleorubidus. The protein is Daunorubicin resistance ABC transporter permease protein DrrB1 of Streptomyces coeruleorubidus.